We begin with the raw amino-acid sequence, 1006 residues long: 5'-3' exoribonuclease 2 (1006 aa).

2 coiled-coil regions span residues 256–287 (FAQD…NSEQ) and 453–544 (RLKK…AESE). The segment at 492 to 529 (DDAVSKANKTNFNLAEVMKQKIINKKHRLEKDNEEEEI) is required for retention in the nucleus. Residues 561 to 575 (DRENSETTEVSRDSP) show a composition bias toward basic and acidic residues. 2 disordered regions span residues 561 to 584 (DREN…NVSE) and 939 to 1006 (HNYG…ANRR). The residue at position 574 (Ser574) is a Phosphoserine. Polar residues predominate over residues 939–956 (HNYGRNSYNSQPGFNNSR). A run of 6 repeats spans residues 955-958 (SRYD), 961-964 (NNNY), 972-974 (NNN), 975-978 (YSGN), 984-986 (YSG), and 996-999 (SRYD). The 2 X 4 AA repeats of S-R-Y-D, N-N-N-Y, Y-S-G-N stretch occupies residues 955–999 (SRYDGGNNNYRQNSNYRNNNYSGNRNSGQYSGNSYSRNNKQSRYD). Over residues 959–993 (GGNNNYRQNSNYRNNNYSGNRNSGQYSGNSYSRNN) the composition is skewed to low complexity. Residues 996-1006 (SRYDNSRANRR) are compositionally biased toward basic and acidic residues.

This sequence belongs to the 5'-3' exonuclease family. XRN2/RAT1 subfamily. Interacts with RAI1 and RTT103. Mg(2+) is required as a cofactor. The cofactor is Mn(2+).

The protein localises to the nucleus. Inhibited by nucleoside 3', 5'-bisphosphates. Functionally, possesses 5'-&gt;3' exoribonuclease activity. Required for the processing of nuclear mRNA, rRNA and small nucleolar RNA (snoRNA) precursors. May promote termination of transcription by RNA polymerase II via the recruitment of 3'-end processing factors to the poly(A) site and by the degradation of nascent RNA downstream of the poly(A) site. The protein is 5'-3' exoribonuclease 2 (RAT1) of Saccharomyces cerevisiae (strain ATCC 204508 / S288c) (Baker's yeast).